The primary structure comprises 648 residues: Leucine-rich repeat and WD repeat-containing protein 1 (648 aa).

LRR repeat units follow at residues 22–43, 48–69, 70–91, and 92–113; these read KIQSLNLSGLQLLSEHLDPNLL, KLRELDLSNNLLETLPANLGLS, HLRILRCTNNQLGDVTALHQFP, and ELEELNLEGNPFLTVSDNLKVS. The disordered stretch occupies residues 214–262; it reads VEHPQAAGASKFRAREVASKRPGKDPVTLPPSKRVRALPPAQAEGSPMG. The span at 226-237 shows a compositional bias: basic and acidic residues; it reads RAREVASKRPGK. Ser259 is modified (phosphoserine). 5 WD repeats span residues 392–432, 443–482, 497–536, 541–592, and 616–648; these read AHKK…QDYK, CGSVPLRLCPVATCPDDFLLAGCEGGCYCWDVRLDQPQKQ, VSGQRVDGLAFVNEDVVASKGSGQGTIYLWSWSQTWAGRG, LPVV…KEPP, and VTKTMINTVVANAAFTYLTALTDSNIVSIWRRC.

It belongs to the LRWD1 family. In terms of assembly, integral component of the ORC complex. Directly interacts with CDT1, GMNN and ORC2. Interacts with ORC2 only when non-ubiquitinated; this interaction prevents LRWD1 ubiquitination and degradation. Some of these interactions are regulated in a cell-cycle dependent manner. Interaction with ORC1 occurs predominantly during G1. Association with phosphorylated ORC1 during mitosis is not efficient. Interaction with CDT1 occurs during G1 phase, as well as during mitosis with phosphorylated CDT1. Interaction with GMNN occurs from G1/S to mitosis. Interaction with ORC2 is observed throughout the cell cycle. The stoichiometry of the ORCA/ORC/CDT1/GMNN complex is 1:1:1:2. Interacts with CUL4A and DDB1; this interaction may lead to ubiquitination. Ubiquitinated; undergoes 'Lys-48'-linked polyubiquitination leading to proteasomal degradation. Ubiquitination occurs within the WD repeats at the end of the G1 phase. Ubiquitination may be catalyzed by the CUL4-DDB1 E3 ubiquitin-protein ligase complex and other E3 ligases. Testis-specific.

The protein localises to the nucleus. It is found in the chromosome. The protein resides in the centromere. It localises to the telomere. Its subcellular location is the cytoplasm. The protein localises to the cytoskeleton. It is found in the microtubule organizing center. The protein resides in the centrosome. It localises to the kinetochore. In terms of biological role, required for G1/S transition. Recruits and stabilizes the origin recognition complex (ORC) onto chromatin during G1 to establish pre-replication complex (preRC) and to heterochromatic sites in post-replicated cells. Binds a combination of DNA and histone methylation repressive marks on heterochromatin. Binds histone H3 and H4 trimethylation marks H3K9me3, H3K27me3 and H4K20me3 in a cooperative manner with DNA methylation. Required for silencing of major satellite repeats. May be important ORC2, ORC3 and ORC4 stability. This is Leucine-rich repeat and WD repeat-containing protein 1 (LRWD1) from Mus musculus (Mouse).